Reading from the N-terminus, the 208-residue chain is NAD(P)H dehydrogenase (quinone) (208 aa).

The region spanning 4–192 (VLVLYYSSYG…DGARFQGRHV (189 aa)) is the Flavodoxin-like domain. FMN contacts are provided by residues 10–15 (SSYGHV) and 78–80 (TRF). Tyrosine 12 contacts NAD(+). Residue tryptophan 98 participates in substrate binding. Residues 113–119 (STGSQHG) and histidine 134 each bind FMN. Residues 161–183 (YGASTLADDGDGGDRQPSANELD) are disordered.

Belongs to the WrbA family. The cofactor is FMN.

It carries out the reaction a quinone + NADH + H(+) = a quinol + NAD(+). The enzyme catalyses a quinone + NADPH + H(+) = a quinol + NADP(+). This is NAD(P)H dehydrogenase (quinone) from Paracoccus denitrificans (strain Pd 1222).